Here is a 432-residue protein sequence, read N- to C-terminus: Glyceraldehyde-3-phosphate dehydrogenase, testis-specific (432 aa).

The interval 1 to 97 (MSRRDVVLTN…PPPPPPPKPA (97 aa)) is testis-specific N-terminal extension. The interval 40–101 (PPPPKVEEPP…PPPKPAKELT (62 aa)) is disordered. Residues 44-55 (KVEEPPPPKEEP) show a composition bias toward basic and acidic residues. Composition is skewed to pro residues over residues 56-67 (PPPPPPPPPPQI) and 75-95 (APPP…PPPK). NAD(+) contacts are provided by residues 109-110 (RI), Asp130, Lys175, Tyr197, and Thr217. D-glyceraldehyde 3-phosphate is bound by residues 247 to 249 (SCT), Thr278, 307 to 308 (TG), and Arg330. The active-site Nucleophile is the Cys248. At Ser350 the chain carries Phosphoserine. NAD(+) is bound at residue Asn412.

Belongs to the glyceraldehyde-3-phosphate dehydrogenase family. In terms of assembly, homotetramer. As to expression, expressed in both head and flagellum of epididymal sperm.

The protein resides in the cytoplasm. It carries out the reaction D-glyceraldehyde 3-phosphate + phosphate + NAD(+) = (2R)-3-phospho-glyceroyl phosphate + NADH + H(+). It functions in the pathway carbohydrate degradation; glycolysis; pyruvate from D-glyceraldehyde 3-phosphate: step 1/5. Its function is as follows. May play an important role in regulating the switch between different pathways for energy production during spermiogenesis and in the spermatozoon. Required for sperm motility and male fertility. The sequence is that of Glyceraldehyde-3-phosphate dehydrogenase, testis-specific (Gapdhs) from Rattus norvegicus (Rat).